Consider the following 156-residue polypeptide: Small ribosomal subunit protein uS7 (156 aa).

Belongs to the universal ribosomal protein uS7 family. In terms of assembly, part of the 30S ribosomal subunit. Contacts proteins S9 and S11.

Its function is as follows. One of the primary rRNA binding proteins, it binds directly to 16S rRNA where it nucleates assembly of the head domain of the 30S subunit. Is located at the subunit interface close to the decoding center, probably blocks exit of the E-site tRNA. This is Small ribosomal subunit protein uS7 from Methylibium petroleiphilum (strain ATCC BAA-1232 / LMG 22953 / PM1).